The primary structure comprises 369 residues: Superinfection exclusion protein (369 aa).

The N-terminal stretch at 1–15 (MIALLILSLTCSVST) is a signal peptide.

The protein belongs to the serpin family. Orthopoxvirus OPG040 subfamily. Interacts with OPG185/A56 protein.

Its subcellular location is the virion membrane. It localises to the host cell membrane. In terms of biological role, negatively regulates superinfection and syncytium formation in infected host cells. Acts in concert with OPG185/A56 protein at the host cell membrane by interacting with and inhibiting the mature virion entry/fusion complex (EFC). This mechanism ensures that new virions released from the cell cannot enter already infected cells. The polypeptide is Superinfection exclusion protein (OPG040) (Vaccinia virus (strain Western Reserve) (VACV)).